The following is a 348-amino-acid chain: Beta-hexosaminidase (348 aa).

Substrate is bound by residues D62, R70, R134, and 164-165 (KH). The active-site Proton donor/acceptor is the H177. The active-site Nucleophile is D249.

The protein belongs to the glycosyl hydrolase 3 family. NagZ subfamily.

It localises to the cytoplasm. The catalysed reaction is Hydrolysis of terminal non-reducing N-acetyl-D-hexosamine residues in N-acetyl-beta-D-hexosaminides.. The protein operates within cell wall biogenesis; peptidoglycan recycling. Plays a role in peptidoglycan recycling by cleaving the terminal beta-1,4-linked N-acetylglucosamine (GlcNAc) from peptide-linked peptidoglycan fragments, giving rise to free GlcNAc, anhydro-N-acetylmuramic acid and anhydro-N-acetylmuramic acid-linked peptides. The sequence is that of Beta-hexosaminidase from Histophilus somni (strain 2336) (Haemophilus somnus).